We begin with the raw amino-acid sequence, 430 residues long: UDP-glucuronate 4-epimerase 3 (430 aa).

Helical transmembrane passes span 29–49 and 90–110; these read SVAKLAFWSLVFVGLIFIFFY and GFSVLVTGAAGFVGTHVSAAL. Position 92–123 (92–123) interacts with NAD(+); sequence SVLVTGAAGFVGTHVSAALKRRGDGVLGLDNF. The Proton acceptor role is filled by Y242.

The protein belongs to the NAD(P)-dependent epimerase/dehydratase family. Homodimer. In terms of tissue distribution, in roots, leaves, siliques, flowers, pollen and stems.

Its subcellular location is the golgi apparatus. It is found in the golgi stack membrane. It carries out the reaction UDP-alpha-D-glucuronate = UDP-alpha-D-galacturonate. Functionally, involved in the synthesis of the negatively charged monosaccharide that forms the backbone of pectic cell wall components. The polypeptide is UDP-glucuronate 4-epimerase 3 (GAE3) (Arabidopsis thaliana (Mouse-ear cress)).